Reading from the N-terminus, the 581-residue chain is Potassium-transporting ATPase potassium-binding subunit (581 aa).

Transmembrane regions (helical) follow at residues L2 to F22, A74 to P94, G135 to I155, I177 to T197, L255 to F275, L284 to E304, W332 to A352, L357 to G377, G381 to G401, F421 to F441, L501 to L521, and A550 to I570.

This sequence belongs to the KdpA family. The system is composed of three essential subunits: KdpA, KdpB and KdpC.

The protein localises to the cell inner membrane. Functionally, part of the high-affinity ATP-driven potassium transport (or Kdp) system, which catalyzes the hydrolysis of ATP coupled with the electrogenic transport of potassium into the cytoplasm. This subunit binds the periplasmic potassium ions and delivers the ions to the membrane domain of KdpB through an intramembrane tunnel. The sequence is that of Potassium-transporting ATPase potassium-binding subunit from Microcystis aeruginosa (strain NIES-843 / IAM M-2473).